The sequence spans 216 residues: LexA repressor (216 aa).

The H-T-H motif DNA-binding region spans 28-48; sequence RAEIAAELGFSSANSAEEHLR. Catalysis depends on for autocatalytic cleavage activity residues Ser-134 and Lys-171.

Belongs to the peptidase S24 family. As to quaternary structure, homodimer.

It catalyses the reaction Hydrolysis of Ala-|-Gly bond in repressor LexA.. Its function is as follows. Represses a number of genes involved in the response to DNA damage (SOS response), including recA and lexA. In the presence of single-stranded DNA, RecA interacts with LexA causing an autocatalytic cleavage which disrupts the DNA-binding part of LexA, leading to derepression of the SOS regulon and eventually DNA repair. The sequence is that of LexA repressor from Paraburkholderia xenovorans (strain LB400).